Here is a 99-residue protein sequence, read N- to C-terminus: Integration host factor subunit beta (99 aa).

Belongs to the bacterial histone-like protein family. In terms of assembly, heterodimer of an alpha and a beta chain.

Its function is as follows. This protein is one of the two subunits of integration host factor, a specific DNA-binding protein that functions in genetic recombination as well as in transcriptional and translational control. The polypeptide is Integration host factor subunit beta (Laribacter hongkongensis (strain HLHK9)).